The chain runs to 152 residues: Protein Smg homolog (152 aa).

Belongs to the Smg family.

The chain is Protein Smg homolog from Nitrosomonas eutropha (strain DSM 101675 / C91 / Nm57).